The following is a 430-amino-acid chain: Serine--tRNA ligase (430 aa).

The segment at 41–60 (QSRTQDLQNERNVRSKSIGK) is disordered. Residue 236–238 (TAE) coordinates L-serine. 267-269 (RSE) contributes to the ATP binding site. Residue Glu290 coordinates L-serine. 354 to 357 (EISS) contacts ATP. Ser390 lines the L-serine pocket.

This sequence belongs to the class-II aminoacyl-tRNA synthetase family. Type-1 seryl-tRNA synthetase subfamily. Homodimer. The tRNA molecule binds across the dimer.

It is found in the cytoplasm. The catalysed reaction is tRNA(Ser) + L-serine + ATP = L-seryl-tRNA(Ser) + AMP + diphosphate + H(+). The enzyme catalyses tRNA(Sec) + L-serine + ATP = L-seryl-tRNA(Sec) + AMP + diphosphate + H(+). The protein operates within aminoacyl-tRNA biosynthesis; selenocysteinyl-tRNA(Sec) biosynthesis; L-seryl-tRNA(Sec) from L-serine and tRNA(Sec): step 1/1. Its function is as follows. Catalyzes the attachment of serine to tRNA(Ser). Is also able to aminoacylate tRNA(Sec) with serine, to form the misacylated tRNA L-seryl-tRNA(Sec), which will be further converted into selenocysteinyl-tRNA(Sec). This is Serine--tRNA ligase from Alteromonas mediterranea (strain DSM 17117 / CIP 110805 / LMG 28347 / Deep ecotype).